A 483-amino-acid polypeptide reads, in one-letter code: Phosphomethylpyrimidine synthase (483 aa).

Residues Asn-97, Met-126, Tyr-156, His-192, 212–214, 253–256, and Glu-292 contribute to the substrate site; these read SRG and DSLR. His-296 provides a ligand contact to Zn(2+). Residue Tyr-319 coordinates substrate. His-360 contacts Zn(2+). [4Fe-4S] cluster is bound by residues Cys-440, Cys-443, and Cys-448.

Belongs to the ThiC family. Requires [4Fe-4S] cluster as cofactor.

The catalysed reaction is 5-amino-1-(5-phospho-beta-D-ribosyl)imidazole + S-adenosyl-L-methionine = 4-amino-2-methyl-5-(phosphooxymethyl)pyrimidine + CO + 5'-deoxyadenosine + formate + L-methionine + 3 H(+). It functions in the pathway cofactor biosynthesis; thiamine diphosphate biosynthesis. Functionally, catalyzes the synthesis of the hydroxymethylpyrimidine phosphate (HMP-P) moiety of thiamine from aminoimidazole ribotide (AIR) in a radical S-adenosyl-L-methionine (SAM)-dependent reaction. This Parasynechococcus marenigrum (strain WH8102) protein is Phosphomethylpyrimidine synthase.